The following is a 225-amino-acid chain: MVSHSELRKLFCSADAVCFDVDSTVIREEGIDELAKFCGVEAAVSEMTRRAMGGALPFKDALTQRLALIQPSRDQVQRLLAEHPPHLTPGIRELVSRLQERNVQVFLISGGFRSIVEHVAAKLNIPTTNVFANRLKFYFNGEYAGFDEMQPTAESGGKGKVIRFLKEKFHFKKIIMIGDGATDMEACPPADAFIGFGGNVIRQQVKDNAKWYITDFVELLGELEE.

The residue at position 1 (Met1) is an N-acetylmethionine. Asp20 functions as the Nucleophile in the catalytic mechanism. Residues Asp20 and Asp22 each contribute to the Mg(2+) site. Asp20–Asp22 lines the L-serine pocket. Asp22 (proton donor) is an active-site residue. Met52 is a binding site for O-phospho-L-serine. Gly53 serves as a coordination point for phosphate. L-serine is bound by residues Ser109 to Gly111 and Lys158. Residues Ser109–Gly111 and Lys158 contribute to the O-phospho-L-serine site. Residue Asp179 participates in Mg(2+) binding. Residue Thr182 participates in O-phospho-L-serine binding. Thr182 is a binding site for phosphate.

This sequence belongs to the HAD-like hydrolase superfamily. SerB family. Homodimer. The cofactor is Mg(2+).

It is found in the cytoplasm. Its subcellular location is the cytosol. The catalysed reaction is O-phospho-L-serine + H2O = L-serine + phosphate. The enzyme catalyses O-phospho-D-serine + H2O = D-serine + phosphate. It participates in amino-acid biosynthesis; L-serine biosynthesis; L-serine from 3-phospho-D-glycerate: step 3/3. In terms of biological role, catalyzes the last irreversible step in the biosynthesis of L-serine from carbohydrates, the dephosphorylation of O-phospho-L-serine to L-serine. L-serine can then be used in protein synthesis, to produce other amino acids, in nucleotide metabolism or in glutathione synthesis, or can be racemized to D-serine, a neuromodulator. May also act on O-phospho-D-serine. This Mus musculus (Mouse) protein is Phosphoserine phosphatase.